A 215-amino-acid chain; its full sequence is N-(5'-phosphoribosyl)anthranilate isomerase (215 aa).

This sequence belongs to the TrpF family.

It carries out the reaction N-(5-phospho-beta-D-ribosyl)anthranilate = 1-(2-carboxyphenylamino)-1-deoxy-D-ribulose 5-phosphate. It participates in amino-acid biosynthesis; L-tryptophan biosynthesis; L-tryptophan from chorismate: step 3/5. The polypeptide is N-(5'-phosphoribosyl)anthranilate isomerase (Paracoccus denitrificans (strain Pd 1222)).